Reading from the N-terminus, the 224-residue chain is COMM domain-containing protein 5 (224 aa).

Position 2 is an N-acetylserine (Ser-2). Residues 151–215 form the COMM domain; it reads HVADFRWRVD…LVLKEMADLE (65 aa).

Belongs to the COMM domain-containing protein 5 family. As to quaternary structure, component of the commander complex consisting of the CCC subcomplex and the retriever subcomplex. Component of the CCC (COMMD/CCDC22/CCDC93) subcomplex consisting of COMMD1, COMMD2, COMMD3, COMMD4, COMMD5, COMMD6, COMMD7, COMMD8, COMMD9, COMMD10, CCDC22 and CCDC93; within the complex forms a heterodimer with COMMD10. Interacts (via COMM domain) with COMMD1 (via COMM domain). Interacts with RELA, RELB, NFKB1/p105. Interacts with CCDC22, CCDC93, SCNN1B, CUL2, CUL3, CUL4A, CUL4B, CUL7. In terms of tissue distribution, highly expressed in heart, stomach, jejunum, kidney, liver, and adrenal gland. Expression was generally higher in adult organs than in fetal tissues, particularly in heart, kidney, and liver.

The protein resides in the cytoplasm. The protein localises to the nucleus. Functionally, scaffold protein in the commander complex that is essential for endosomal recycling of transmembrane cargos; the commander complex is composed of the CCC subcomplex and the retriever subcomplex. May modulate activity of cullin-RING E3 ubiquitin ligase (CRL) complexes. Negatively regulates cell proliferation. Negatively regulates cell cycle G2/M phase transition probably by transactivating p21/CDKN1A through the p53/TP53-independent signaling pathway. Involved in kidney proximal tubule morphogenesis. Down-regulates activation of NF-kappa-B. This Homo sapiens (Human) protein is COMM domain-containing protein 5 (COMMD5).